A 286-amino-acid polypeptide reads, in one-letter code: Bifunctional protein FolD (286 aa).

NADP(+) contacts are provided by residues 166–168 (GQS), Ser191, and Ile232.

This sequence belongs to the tetrahydrofolate dehydrogenase/cyclohydrolase family. In terms of assembly, homodimer.

It catalyses the reaction (6R)-5,10-methylene-5,6,7,8-tetrahydrofolate + NADP(+) = (6R)-5,10-methenyltetrahydrofolate + NADPH. The enzyme catalyses (6R)-5,10-methenyltetrahydrofolate + H2O = (6R)-10-formyltetrahydrofolate + H(+). Its pathway is one-carbon metabolism; tetrahydrofolate interconversion. Catalyzes the oxidation of 5,10-methylenetetrahydrofolate to 5,10-methenyltetrahydrofolate and then the hydrolysis of 5,10-methenyltetrahydrofolate to 10-formyltetrahydrofolate. This is Bifunctional protein FolD from Alkalilimnicola ehrlichii (strain ATCC BAA-1101 / DSM 17681 / MLHE-1).